We begin with the raw amino-acid sequence, 681 residues long: Ribosomal L1 domain-containing protein CG13096 (681 aa).

Disordered stretches follow at residues 1 to 248 and 579 to 681; these read MVKV…AKSK and DAAP…DDEE. Phosphoserine is present on residues Ser15 and Ser17. A compositionally biased stretch (basic and acidic residues) spans 54-74; it reads VKKDAIKKEPEVSKKGAEKKQ. Ser89 is subject to Phosphoserine. Low complexity predominate over residues 103 to 112; sequence KPAASGAPVG. Position 128 is a phosphoserine (Ser128). The span at 189–217 shows a compositional bias: low complexity; it reads QAAPAKPAKAQPASQLQKKAKAVQKLSKP. Over residues 599–610 the composition is skewed to basic and acidic residues; it reads KESSSEGAKADA. Residues 611–681 are compositionally biased toward acidic residues; the sequence is ESDEEEEVEE…EDDDDDDDEE (71 aa).

The protein belongs to the universal ribosomal protein uL1 family. Highly divergent.

The sequence is that of Ribosomal L1 domain-containing protein CG13096 from Drosophila melanogaster (Fruit fly).